Here is a 142-residue protein sequence, read N- to C-terminus: uncharacterized protein (142 aa).

The Peptidase C39 domain maps to 18–137 (QSRSYSCGPA…RIFTGNVLVV (120 aa)).

This is an uncharacterized protein from Methanothermobacter thermautotrophicus (strain ATCC 29096 / DSM 1053 / JCM 10044 / NBRC 100330 / Delta H) (Methanobacterium thermoautotrophicum).